A 134-amino-acid polypeptide reads, in one-letter code: Large ribosomal subunit protein uL24 (134 aa).

This sequence belongs to the universal ribosomal protein uL24 family. Part of the 50S ribosomal subunit.

One of two assembly initiator proteins, it binds directly to the 5'-end of the 23S rRNA, where it nucleates assembly of the 50S subunit. Functionally, located at the polypeptide exit tunnel on the outside of the subunit. The chain is Large ribosomal subunit protein uL24 from Sulfolobus acidocaldarius (strain ATCC 33909 / DSM 639 / JCM 8929 / NBRC 15157 / NCIMB 11770).